Reading from the N-terminus, the 443-residue chain is Xaa-Pro dipeptidase (443 aa).

The Mn(2+) site is built by Asp246, Asp257, His339, Glu384, and Glu423.

This sequence belongs to the peptidase M24B family. Bacterial-type prolidase subfamily. The cofactor is Mn(2+).

It catalyses the reaction Xaa-L-Pro dipeptide + H2O = an L-alpha-amino acid + L-proline. In terms of biological role, splits dipeptides with a prolyl residue in the C-terminal position. The chain is Xaa-Pro dipeptidase from Yersinia pestis bv. Antiqua (strain Nepal516).